The chain runs to 191 residues: Rho-related GTP-binding protein RhoG (191 aa).

10-17 (GDGAVGKT) serves as a coordination point for GTP. Residues 32 to 40 (YIPTVFDNY) carry the Effector region motif. Residues 57–61 (DTAGQ) and 115–118 (TKKD) contribute to the GTP site. Phosphothreonine is present on residues Thr138 and Thr180. Cys188 carries the post-translational modification Cysteine methyl ester. Residue Cys188 is the site of S-geranylgeranyl cysteine attachment. A propeptide spans 189–191 (ILL) (removed in mature form).

The protein belongs to the small GTPase superfamily. Rho family. As to quaternary structure, interacts with ARHGEF26. Interacts with ARHGEF16. Interacts with UNC13D; the interaction increases RhoG affinity to the membrane lipids, targets UNC13D to membrane lipids and facilitates cytotoxic granule (CG) docking to the plasma membrane.

Its subcellular location is the cell membrane. Its function is as follows. Plays a role in immunological synaptic F-actin density and architecture organization. Regulates actin reorganization in lymphocytes, possibly through the modulation of Rac1 activity. Required for the formation of membrane ruffles during macropinocytosis. Plays a role in cell migration and is required for the formation of cup-like structures during trans-endothelial migration of leukocytes. Binds phospholipids in an activation-dependent manner; thereby acting as an anchor for other proteins to the plasma membrane (PM). Plays a role in exocytosis of cytotoxic granules (CG) by lymphocytes/Component of the exocytosis machinery in natural killer (NK) and CD8+ T cells. Promotes the docking of cytotoxic granules (CG) to the plasma membrane through the interaction with UNC13D. Involved in the cytotoxic activity of lymphocytes/primary CD8+ T cells. The polypeptide is Rho-related GTP-binding protein RhoG (RHOG) (Cricetus cricetus (Black-bellied hamster)).